Here is a 495-residue protein sequence, read N- to C-terminus: PXA domain protein 1 (495 aa).

A PXA domain is found at 1–174; that stretch reads MAKLSSLLNP…KFIIYLSKAI (174 aa). 2 helical membrane-spanning segments follow: residues 7–27 and 235–255; these read LLNP…YSGI and WFFF…FVAE. Composition is skewed to polar residues over residues 402–419 and 427–436; these read AVSS…QRSF and DSQTPSENSA. Residues 402–436 are disordered; that stretch reads AVSSPTKANTNKSHQRSFSIPKATKDSQTPSENSA. The helical transmembrane segment at 446–466 threads the bilayer; sequence AYSQIPVIPFFLPSDKLIMLV.

The protein resides in the endosome membrane. Functionally, required for required for normal vacuolar morphology and for vacuolar protein transport. Also required for endosome-to-Golgi protein transport. This chain is PXA domain protein 1 (pxa1), found in Schizosaccharomyces pombe (strain 972 / ATCC 24843) (Fission yeast).